Reading from the N-terminus, the 298-residue chain is Inosose dehydratase (298 aa).

It belongs to the IolE/MocC family. Glutathione is required as a cofactor. Requires Co(2+) as cofactor. It depends on Mn(2+) as a cofactor.

It catalyses the reaction scyllo-inosose = 3D-3,5/4-trihydroxycyclohexane-1,2-dione + H2O. It functions in the pathway polyol metabolism; myo-inositol degradation into acetyl-CoA; acetyl-CoA from myo-inositol: step 2/7. In terms of biological role, catalyzes the dehydration of inosose (2-keto-myo-inositol, 2KMI or 2,4,6/3,5-pentahydroxycyclohexanone) to 3D-(3,5/4)-trihydroxycyclohexane-1,2-dione (D-2,3-diketo-4-deoxy-epi-inositol). This Bacillus velezensis (strain DSM 23117 / BGSC 10A6 / LMG 26770 / FZB42) (Bacillus amyloliquefaciens subsp. plantarum) protein is Inosose dehydratase.